The sequence spans 607 residues: MTTETEKRALEDDTVESKRIKYDKGIAPIKPEFIVENPSVPADDRYVNDDDAEAGDRNGEEKGKKKKRGQNKKRDMRQQHEEVRLCSSLLDPSNPGTCRFGPEHCRSTHDVTTYLAAKAPDIDGVCPVFKSIGYCPAGLKCRWLNSHYEDGKLKRDQSQIDAYASSGQGEVNKISTEAKLALQKKKYLFEVSDNVIKYLDSQVQSDENIAKREEAKENNASYVEAPFKIAEKKKLDLRGAKIVSPLTTVGNLPYRRLMKTLGADVTYSEMALSLPLLQATNSEWALPKAHSSEYPGFGVQIATSKHWAAAKAAEVIYKETTHVSELNLNCGCPIDLLYRQGQGSALMEQPARLLRILKGMNASSGDIPVTVKIRTGTKDNKNTAKSLVERVLAENDVAAITLHGRSRQQRYTKDADWEYIKEVGAVVTEWNNKKEEDKESSETNRTNFVGNGDVFTHEDWYNAVNTEGVDSVMVARGALIKPWIFEEVEAQQYLDKSATERLDILRKFADFSLEHWGSDEYGVGLSRRFMCEFLSFTHRYIPVGILERLPPKINQRPPQWRGRNELETLLGSTDYKDWIKITEMFYGKTGDNFTFIPKHKSNAYESG.

Positions 27–88 (APIKPEFIVE…QHEEVRLCSS (62 aa)) are disordered. 2 stretches are compositionally biased toward basic and acidic residues: residues 42–63 (ADDRYVNDDDAEAGDRNGEEKG) and 72–84 (KKRDMRQQHEEVR). 2 consecutive C3H1-type zinc fingers follow at residues 81 to 112 (EEVRLCSSLLDPSNPGTCRFGPEHCRSTHDVT) and 125 to 150 (VCPVFKSIGYCPAGLKCRWLNSHYED). Residues 245–247 (PLT) and Gln300 contribute to the FMN site. The Proton donor role is filled by Cys332. Residues Lys372, His403, 451-453 (NGD), and 475-476 (AR) contribute to the FMN site.

Belongs to the Dus family. Dus3 subfamily. Requires FMN as cofactor.

The protein resides in the cytoplasm. The protein localises to the nucleus. The catalysed reaction is 5,6-dihydrouridine(47) in tRNA + NAD(+) = uridine(47) in tRNA + NADH + H(+). It catalyses the reaction 5,6-dihydrouridine(47) in tRNA + NADP(+) = uridine(47) in tRNA + NADPH + H(+). The enzyme catalyses a 5,6-dihydrouridine in mRNA + NAD(+) = a uridine in mRNA + NADH + H(+). It carries out the reaction a 5,6-dihydrouridine in mRNA + NADP(+) = a uridine in mRNA + NADPH + H(+). Its function is as follows. Catalyzes the synthesis of dihydrouridine, a modified base found in the D-loop of most tRNAs. Specifically modifies U47 in cytoplasmic tRNAs. Catalyzes the synthesis of dihydrouridine in some mRNAs, thereby affecting their translation. This is tRNA-dihydrouridine(47) synthase [NAD(P)(+)] (DUS3) from Meyerozyma guilliermondii (strain ATCC 6260 / CBS 566 / DSM 6381 / JCM 1539 / NBRC 10279 / NRRL Y-324) (Yeast).